The sequence spans 316 residues: Solute carrier family 25 member 32 (316 aa).

Solcar repeat units lie at residues 20–109, 118–209, and 222–306; these read HVRY…IKSY, LEPL…LKLK, and LSTA…VSHF. The next 6 membrane-spanning stretches (helical) occupy residues 26-46, 89-106, 123-143, 185-203, 227-243, and 281-300; these read LVAG…LDLV, VWGA…YNAI, YLVS…PLWV, GFVP…FMAY, YISV…AATY, and GIAP…FVVY.

This sequence belongs to the mitochondrial carrier (TC 2.A.29) family.

The protein localises to the mitochondrion inner membrane. The enzyme catalyses FAD(in) = FAD(out). Facilitates flavin adenine dinucleotide (FAD) translocation across the mitochondrial inner membrane into the mitochondrial matrix where it acts as a redox cofactor to assist flavoenzyme activities in fundamental metabolic processes including fatty acid beta-oxidation, amino acid and choline metabolism as well as mitochondrial electron transportation. In particular, provides FAD to DLD dehydrogenase of the glycine cleavage system, part of mitochondrial one-carbon metabolic pathway involved in neural tube closure in early embryogenesis. The chain is Solute carrier family 25 member 32 from Mus musculus (Mouse).